A 472-amino-acid polypeptide reads, in one-letter code: MKGAAFVKKEGLKQKALEIGRVPTHLKLEIEDYGGDDKRAHFCWADPQDENTGIIVELGPDGELESLSRDIEPESGERLSEEKLEDIMRQFVETHHPGALSAFVREENDRAYGDKVRFSYVQMEAGLPLPMSGFMADVSLSGEIVYFRYYGEAGSIIKPKRVADVEEALAFIKKDVEFDLLFEVLHRSVYKNGDDQPHLVYEPEGRAITVPADLVQEEQAVDDDDDYREPESFPLPLFEGIREKADPDSMIGIENGFVKEREADLGDGRIGIVWRNPDDPVYQPADKSMDSWFKGRTHQVLKTIYNKETGKLEGVMSFMEKKGPLTVTLAECEKIALRFLFALFPNADQYFRIRYDEKDEEENAVAGFTFEAHCHGVPLRFGQIRICVSRQTGYITVYMGPDIDPNKLATIDPVPAISVEQAKSIFWQHFKVELGWEREYGDDEEHSYRLVYKPVYPHFIDAHTGEPVFSIW.

The protein to B.subtilis YcdC.

This is an uncharacterized protein from Bacillus subtilis (strain 168).